The chain runs to 324 residues: Pyruvate synthase subunit PorB (324 aa).

Residues C26, C29, and C57 each contribute to the [4Fe-4S] cluster site. Residues 150–172 form a disordered region; the sequence is TGNQRSGSTPPGSDTTTAPVGKK. A compositionally biased stretch (low complexity) spans 155 to 166; that stretch reads SGSTPPGSDTTT. Residue C228 participates in [4Fe-4S] cluster binding.

As to quaternary structure, heterotetramer of one alpha, one beta, one delta and one gamma chain. [4Fe-4S] cluster serves as cofactor.

The catalysed reaction is 2 oxidized [2Fe-2S]-[ferredoxin] + pyruvate + CoA = 2 reduced [2Fe-2S]-[ferredoxin] + acetyl-CoA + CO2 + H(+). The chain is Pyruvate synthase subunit PorB (porB) from Thermotoga maritima (strain ATCC 43589 / DSM 3109 / JCM 10099 / NBRC 100826 / MSB8).